A 600-amino-acid polypeptide reads, in one-letter code: NADH-quinone oxidoreductase subunit C/D (600 aa).

Residues M1 to Q190 are NADH dehydrogenase I subunit C. The NADH dehydrogenase I subunit D stretch occupies residues D214–R600.

In the N-terminal section; belongs to the complex I 30 kDa subunit family. It in the C-terminal section; belongs to the complex I 49 kDa subunit family. In terms of assembly, NDH-1 is composed of 13 different subunits. Subunits NuoB, CD, E, F, and G constitute the peripheral sector of the complex.

Its subcellular location is the cell inner membrane. The enzyme catalyses a quinone + NADH + 5 H(+)(in) = a quinol + NAD(+) + 4 H(+)(out). Its function is as follows. NDH-1 shuttles electrons from NADH, via FMN and iron-sulfur (Fe-S) centers, to quinones in the respiratory chain. The immediate electron acceptor for the enzyme in this species is believed to be ubiquinone. Couples the redox reaction to proton translocation (for every two electrons transferred, four hydrogen ions are translocated across the cytoplasmic membrane), and thus conserves the redox energy in a proton gradient. This Escherichia coli (strain K12 / DH10B) protein is NADH-quinone oxidoreductase subunit C/D.